The chain runs to 541 residues: Tegument protein UL21 homolog (541 aa).

Belongs to the alphaherpesvirinae UL21 protein family. As to quaternary structure, interacts (via C-terminus) with UL16.

It localises to the virion tegument. The protein resides in the host cytoplasm. The protein localises to the host nucleus. Its function is as follows. May participate in DNA packaging/capsid maturation events. Promotes efficient incorporation of tegument proteins UL46, UL49, and US3 homologs into virions. May also play a role in capsid transport to the trans-Golgi network (TGN). This is Tegument protein UL21 homolog from Homo sapiens (Human).